The sequence spans 476 residues: DnaJ homolog subfamily C member 7 homolog (476 aa).

The tract at residues 1–22 (MTEVETTHMNAGTESQQEPAEL) is disordered. Polar residues predominate over residues 7-18 (THMNAGTESQQE). TPR repeat units lie at residues 23–56 (AEKQKAIGNAFYKEKKYAEAIKAYTEAIDLGSDS), 59–92 (AIYYSNRAATYMQIGEFELALCDAKQSDRIKPDV), 143–176 (MSWMYLKAQVYIFQNDMDRAQKIAHDVLRLNPKN), 177–210 (VEALVLRGKVMYYSGENAKAITHFQEALKLDPDC), 223–256 (LENTKNQGNDLFRQGNYQDAYEKYSEALQIDPDN), 261–294 (AKLYMNRATVLLRLKRPEEALSDSDNALAIDSSY), and 295–328 (LKGLKVRAKAHEALEKWEEAVRDVQSAIELDASD). Residues 349 to 414 (DHYKILGVSK…ESRRRFDSGV (66 aa)) enclose the J domain.

The protein localises to the cytoplasm. The chain is DnaJ homolog subfamily C member 7 homolog from Schizosaccharomyces pombe (strain 972 / ATCC 24843) (Fission yeast).